The primary structure comprises 308 residues: L-lactate dehydrogenase 2 (308 aa).

Residues valine 13, aspartate 34, arginine 39, tyrosine 64, and 78–79 (GV) each bind NAD(+). Position 87 (arginine 87) interacts with substrate. Threonine 100 provides a ligand contact to NAD(+). 119 to 122 (NPVD) contributes to the substrate binding site. Threonine 142 contributes to the NAD(+) binding site. Substrate is bound at residue 147–150 (DSMR). The Proton acceptor role is filled by histidine 174. Threonine 224 provides a ligand contact to substrate.

It belongs to the LDH/MDH superfamily. LDH family. In terms of assembly, homotetramer.

It is found in the cytoplasm. The catalysed reaction is (S)-lactate + NAD(+) = pyruvate + NADH + H(+). Its pathway is fermentation; pyruvate fermentation to lactate; (S)-lactate from pyruvate: step 1/1. Its function is as follows. Catalyzes the conversion of lactate to pyruvate. The protein is L-lactate dehydrogenase 2 of Lactobacillus acidophilus (strain ATCC 700396 / NCK56 / N2 / NCFM).